Consider the following 406-residue polypeptide: MPEVVFSVDHSKSMRDQAVPGHNRWHPDIPAAATVKPGSEFRIECKEWTDGQIGNNDSANDVRDVDLAPCHMLSGPIKVEGAEPGDLLIVDILDIGPVPQTNGPNCGEGWGYSGIFAKVNGGGFLTDYYPDAYKAIWDFHGQQCTSRHVPGVRYTGITHPGLFGTAPSPDLLAKWNERERALIATDPDRVPPLALPPLVDGTLGGTASGDLLQAIANDGARTVPPRENGGNHDIKNFTRGSRIFYPVFVEGAMLSGGDLHFSQGDGEINFCGAIEMGGFIDMHVDLIKGGMETYGVTTNPIFMPGRVEPLYSEWLTFIGISVDHAENRNAYMDATMAYRNACLNAIEYLKKWGYTGEQAYLILGTSPIEGASAASWTSRTHVVRCSCRPRSSTSTSPRRQGPAEGR.

The span at 387 to 399 shows a compositional bias: low complexity; that stretch reads CRPRSSTSTSPRR. Positions 387–406 are disordered; the sequence is CRPRSSTSTSPRRQGPAEGR.

This sequence belongs to the acetamidase/formamidase family.

It carries out the reaction a monocarboxylic acid amide + H2O = a monocarboxylate + NH4(+). The enzyme catalyses acetamide + H2O = acetate + NH4(+). Allows acetamide to be used as a sole carbon or nitrogen source. This chain is Acetamidase (amdA), found in Mycolicibacterium smegmatis (Mycobacterium smegmatis).